Reading from the N-terminus, the 229-residue chain is Large ribosomal subunit protein bL25 (229 aa).

2 disordered regions span residues 1–21 (MDIIKLNATRREDSGKSASSR) and 182–229 (NAPE…KDKK). The span at 195–222 (PAAGAPAAGAAAAPAAGAAAPAKGAAPA) shows a compositional bias: low complexity.

The protein belongs to the bacterial ribosomal protein bL25 family. CTC subfamily. In terms of assembly, part of the 50S ribosomal subunit; part of the 5S rRNA/L5/L18/L25 subcomplex. Contacts the 5S rRNA. Binds to the 5S rRNA independently of L5 and L18.

Its function is as follows. This is one of the proteins that binds to the 5S RNA in the ribosome where it forms part of the central protuberance. This chain is Large ribosomal subunit protein bL25, found in Sorangium cellulosum (strain So ce56) (Polyangium cellulosum (strain So ce56)).